The following is a 180-amino-acid chain: Inosine/xanthosine triphosphatase (180 aa).

8–13 (TTNPAK) contacts substrate. Mg(2+)-binding residues include Asp-38 and Glu-68. 68–69 (EA) lines the substrate pocket.

The protein belongs to the YjjX NTPase family. Homodimer. It depends on Mg(2+) as a cofactor. Mn(2+) is required as a cofactor.

The enzyme catalyses XTP + H2O = XDP + phosphate + H(+). The catalysed reaction is ITP + H2O = IDP + phosphate + H(+). Functionally, phosphatase that hydrolyzes non-canonical purine nucleotides such as XTP and ITP to their respective diphosphate derivatives. Probably excludes non-canonical purines from DNA/RNA precursor pool, thus preventing their incorporation into DNA/RNA and avoiding chromosomal lesions. This Yersinia pseudotuberculosis serotype IB (strain PB1/+) protein is Inosine/xanthosine triphosphatase.